Consider the following 654-residue polypeptide: Beta-mannosyltransferase 2 (654 aa).

Over methionine 1–asparagine 37 the chain is Cytoplasmic. Residues phenylalanine 38–leucine 58 form a helical membrane-spanning segment. Over alanine 59–serine 654 the chain is Extracellular.

This sequence belongs to the BMT family.

Its subcellular location is the membrane. Beta-mannosyltransferase involved in cell wall biosynthesis. Required for the addition of beta-mannose to the acid-labile fraction of cell wall phosphopeptidomannan. The protein is Beta-mannosyltransferase 2 (RHD1) of Candida albicans (strain SC5314 / ATCC MYA-2876) (Yeast).